Here is a 306-residue protein sequence, read N- to C-terminus: Non-specific ribonucleoside hydrolase RihC (306 aa).

His235 is an active-site residue.

Belongs to the IUNH family. RihC subfamily.

Functionally, hydrolyzes both purine and pyrimidine ribonucleosides with a broad-substrate specificity. This Salmonella agona (strain SL483) protein is Non-specific ribonucleoside hydrolase RihC.